A 100-amino-acid chain; its full sequence is Large ribosomal subunit protein uL23 (100 aa).

This sequence belongs to the universal ribosomal protein uL23 family. In terms of assembly, part of the 50S ribosomal subunit. Contacts protein L29, and trigger factor when it is bound to the ribosome.

One of the early assembly proteins it binds 23S rRNA. One of the proteins that surrounds the polypeptide exit tunnel on the outside of the ribosome. Forms the main docking site for trigger factor binding to the ribosome. The polypeptide is Large ribosomal subunit protein uL23 (Shigella dysenteriae serotype 1 (strain Sd197)).